The primary structure comprises 159 residues: Dihydrofolate reductase (159 aa).

Residues 1 to 158 enclose the DHFR domain; sequence MISLIAALAV…HSYCFEILER (158 aa). Residue Ile5 coordinates substrate. NADP(+)-binding positions include Ala7 and 13–19; that span reads VIGMENA. Residue Asp27 coordinates substrate. 45 to 46 contributes to the NADP(+) binding site; sequence HT. Arg52 and Arg57 together coordinate substrate. Residues 63 to 64, Lys76, and 95 to 102 contribute to the NADP(+) site; these read SS and GGGRVYEQ. Position 113 (Thr113) interacts with substrate.

This sequence belongs to the dihydrofolate reductase family.

The enzyme catalyses (6S)-5,6,7,8-tetrahydrofolate + NADP(+) = 7,8-dihydrofolate + NADPH + H(+). Its pathway is cofactor biosynthesis; tetrahydrofolate biosynthesis; 5,6,7,8-tetrahydrofolate from 7,8-dihydrofolate: step 1/1. Its function is as follows. Key enzyme in folate metabolism. Catalyzes an essential reaction for de novo glycine and purine synthesis, and for DNA precursor synthesis. The polypeptide is Dihydrofolate reductase (folA) (Escherichia coli O6:H1 (strain CFT073 / ATCC 700928 / UPEC)).